The primary structure comprises 403 residues: MESSREEALRCIGLARKYLNAGEYDKALKFANKSLRIHATTEGEDFVKQIEKQKLTGSPNPQATPKQENKSNFFSEKQSVRENGNSSAGEKKQKWTSEQHLLVQKIIKYKNHQYYEILDLKKTCTDTEIKKSYKKLALQLHPDKNHAPSADEAFKMVSKAFQVLSDPNLRAHYDRTGMDPESRASAASSSFSSNAGGHPGFSAYPQANMSPEDLFNSFFGDQFFSGPGTFFFGGGPGIRVHQFGGRPRNFARRQQAQDMPPKSIFYQLLPLIVVILFAFLSNFSWSDSTSVNTRYSFQQNYKYTVPRTTAKHNIPYYMSQKDLDKLSSRDIRRLNEKVEHTYTQNVHNACLREQQIKEDEIRRAQGWFFPDKEALKKAKELRLPNCEELNRLGYRTYSNSYYF.

Residues 55–88 (LTGSPNPQATPKQENKSNFFSEKQSVRENGNSSA) are compositionally biased toward polar residues. Residues 55–95 (LTGSPNPQATPKQENKSNFFSEKQSVRENGNSSAGEKKQKW) are disordered. S58 is subject to Phosphoserine. Positions 113-177 (QYYEILDLKK…NLRAHYDRTG (65 aa)) constitute a J domain. Residues 263–283 (SIFYQLLPLIVVILFAFLSNF) form a helical membrane-spanning segment.

It localises to the endoplasmic reticulum membrane. This is an uncharacterized protein from Schizosaccharomyces pombe (strain 972 / ATCC 24843) (Fission yeast).